Consider the following 233-residue polypeptide: Fibrillarin-like rRNA/tRNA 2'-O-methyltransferase (233 aa).

S-adenosyl-L-methionine is bound by residues 89-90, 108-109, 133-134, and 153-156; these read TT, EF, DA, and DIAQ.

It belongs to the methyltransferase superfamily. Fibrillarin family. As to quaternary structure, interacts with nop5. Component of box C/D small ribonucleoprotein (sRNP) particles that contain rpl7ae, FlpA and nop5, plus a guide RNA.

In terms of biological role, involved in pre-rRNA and tRNA processing. Utilizes the methyl donor S-adenosyl-L-methionine to catalyze the site-specific 2'-hydroxyl methylation of ribose moieties in rRNA and tRNA. Site specificity is provided by a guide RNA that base pairs with the substrate. Methylation occurs at a characteristic distance from the sequence involved in base pairing with the guide RNA. This is Fibrillarin-like rRNA/tRNA 2'-O-methyltransferase from Sulfurisphaera tokodaii (strain DSM 16993 / JCM 10545 / NBRC 100140 / 7) (Sulfolobus tokodaii).